We begin with the raw amino-acid sequence, 459 residues long: Ribulose bisphosphate carboxylase large chain (459 aa).

A propeptide spanning residues 1 to 2 (MS) is cleaved from the precursor. An N-acetylproline modification is found at Pro3. Residue Lys14 is modified to N6,N6,N6-trimethyllysine. Residues Xaa123 and Thr173 each coordinate substrate. Catalysis depends on Lys175, which acts as the Proton acceptor. Residue Lys177 participates in substrate binding. 3 residues coordinate Mg(2+): Lys201, Asp203, and Glu204. At Lys201 the chain carries N6-carboxylysine. Catalysis depends on His294, which acts as the Proton acceptor. Substrate contacts are provided by Arg295, His327, and Ser379.

This sequence belongs to the RuBisCO large chain family. Type I subfamily. As to quaternary structure, heterohexadecamer of 8 large chains and 8 small chains; disulfide-linked. The disulfide link is formed within the large subunit homodimers. It depends on Mg(2+) as a cofactor. Post-translationally, the disulfide bond which can form in the large chain dimeric partners within the hexadecamer appears to be associated with oxidative stress and protein turnover.

It localises to the plastid. Its subcellular location is the chloroplast. The catalysed reaction is 2 (2R)-3-phosphoglycerate + 2 H(+) = D-ribulose 1,5-bisphosphate + CO2 + H2O. It carries out the reaction D-ribulose 1,5-bisphosphate + O2 = 2-phosphoglycolate + (2R)-3-phosphoglycerate + 2 H(+). RuBisCO catalyzes two reactions: the carboxylation of D-ribulose 1,5-bisphosphate, the primary event in carbon dioxide fixation, as well as the oxidative fragmentation of the pentose substrate in the photorespiration process. Both reactions occur simultaneously and in competition at the same active site. The polypeptide is Ribulose bisphosphate carboxylase large chain (Corynocarpus laevigatus (New Zealand laurel)).